The primary structure comprises 524 residues: Coronin-2A (524 aa).

WD repeat units lie at residues 80–120, 130–170, 178–217, 220–263, and 269–308; these read GHRG…LTRN, GHAR…SVIA, CHQD…VLQE, YKGH…VPLT, and GSSG…PHLT. Residues 403–436 form a disordered region; that stretch reads LLDSQTLPPERPLSNSMVQVSPQPLEPMKQPAED. Over residues 404–424 the composition is skewed to polar residues; sequence LDSQTLPPERPLSNSMVQVSP. Positions 484–523 form a coiled coil; the sequence is QMFYRQQEEIRRLRELLIQREVQTKQLELEIKNLRMALGQ.

The protein belongs to the WD repeat coronin family. As to quaternary structure, binds actin. Component of the N-Cor repressor complex, at least composed of NCOR1, NCOR2, HDAC3, TBL1X, TBL1R, CORO2A and GPS2.

In Mus musculus (Mouse), this protein is Coronin-2A (Coro2a).